Here is a 153-residue protein sequence, read N- to C-terminus: Superoxide dismutase [Cu-Zn] (153 aa).

Cu cation-binding residues include His-45, His-47, and His-62. Cys-56 and Cys-145 are disulfide-bonded. Zn(2+) is bound by residues His-62, His-70, His-79, and Asp-82. Position 119 (His-119) interacts with Cu cation.

This sequence belongs to the Cu-Zn superoxide dismutase family. In terms of assembly, homodimer. Cu cation serves as cofactor. It depends on Zn(2+) as a cofactor.

The protein localises to the cytoplasm. It carries out the reaction 2 superoxide + 2 H(+) = H2O2 + O2. In terms of biological role, destroys radicals which are normally produced within the cells and which are toxic to biological systems. In Drosophila willistoni (Fruit fly), this protein is Superoxide dismutase [Cu-Zn].